Here is a 377-residue protein sequence, read N- to C-terminus: Oleosin-B4 (377 aa).

A polar region spans residues 1–37; sequence MRNEIQNETAQTDQTQGSMFSFFNLFPFLLPMFEVIK. A run of 3 helical transmembrane segments spans residues 16 to 36, 38 to 58, and 69 to 89; these read QGSM…FEVI, MVVA…TLSG, and LFII…VLAA. The hydrophobic stretch occupies residues 38 to 133; sequence MVVASVASVV…IIPESIKPSN (96 aa). 3 repeat units span residues 115–124, 125–134, and 135–144. The 3 X 10 AA tandem repeats of I-P-E-[SG]-I-K-P-S-N-[IV] stretch occupies residues 115-144; the sequence is IPESIKPSNIIPESIKPSNIIPEGIKPSNI. Residues 158–377 are disordered; the sequence is KIKAKKEEKS…SSHGSGGKHI (220 aa). Basic and acidic residues-rich tracts occupy residues 162–185 and 195–231; these read KKEE…KGED and DEDK…EGKH. The 2-1 repeat unit spans residues 196-202; the sequence is EDKHGSG. A 2.1 repeat occupies 196–202; it reads EDKHGSG. The segment at 196–222 is 3 X 6 AA tandem repeats of E-[SD]-[KT]-H-G-[KS]-G; the sequence is EDKHGSGAKHGKGESKHGKGESTHGKG. The stretch at 204-208 is one 2-2; truncated repeat; it reads KHGKG. 7 consecutive repeat copies span residues 209 to 215, 216 to 222, 230 to 247, 260 to 277, 278 to 295, 296 to 313, and 355 to 359. The segment at 230 to 313 is 4 X 18 AA tandem repeats of K-H-E-S-G-G-[SA]-[PSA]-M-G-G-G-K-H-G-S-[GE]-G; it reads KHGSGGSSMG…MGGGKHGSGG (84 aa). The span at 232–244 shows a compositional bias: gly residues; that stretch reads GSGGSSMGGGKHG. The segment covering 247-263 has biased composition (basic and acidic residues); the sequence is GKHETGGKHGSGGKHES. Composition is skewed to gly residues over residues 280-292 and 302-314; these read GSGG…GKHG and SAMG…SGGK. The span at 350–369 shows a compositional bias: low complexity; the sequence is SSTSESSDGSSDGSSSDGSS. The 3 X 5 AA tandem repeats of S-S-D-G-S stretch occupies residues 355-368; the sequence is SSDGSSDGSSSDGS. The 4-2; truncated repeat unit spans residues 360–363; that stretch reads SDGS. Residues 364-368 form a 4-3 repeat; that stretch reads SSDGS.

The protein belongs to the oleosin family. In terms of tissue distribution, the full-length protein is found in the tapetal lipid bodies of immature anthers, the proteolytically cleaved C-terminal product is found on the coats of pollen grains. No expression is detected in other flower organs, siliques or seedlings.

It localises to the lipid droplet. Its subcellular location is the membrane. In terms of biological role, many of the major pollen coat proteins are derived from endoproteolytic cleavage of oleosin-like proteins. This is Oleosin-B4 from Brassica napus (Rape).